A 216-amino-acid chain; its full sequence is Small ribosomal subunit protein uS3c (216 aa).

Residues 43-118 enclose the KH type-2 domain; that stretch reads IKNYIQKNRR…KLNIAIVKVT (76 aa).

Belongs to the universal ribosomal protein uS3 family. As to quaternary structure, part of the 30S ribosomal subunit.

Its subcellular location is the plastid. The protein resides in the chloroplast. The protein is Small ribosomal subunit protein uS3c (rps3) of Phaseolus angularis (Azuki bean).